A 243-amino-acid polypeptide reads, in one-letter code: Probable septum site-determining protein MinC (243 aa).

This sequence belongs to the MinC family. As to quaternary structure, interacts with MinD and FtsZ.

Functionally, cell division inhibitor that blocks the formation of polar Z ring septums. Rapidly oscillates between the poles of the cell to destabilize FtsZ filaments that have formed before they mature into polar Z rings. Prevents FtsZ polymerization. This Wigglesworthia glossinidia brevipalpis protein is Probable septum site-determining protein MinC.